The sequence spans 519 residues: Cytochrome P450 88A1 (519 aa).

Residues 1–21 (MLGVGMAAAVLLGAVALLLAD) form a helical membrane-spanning segment. Cysteine 466 is a binding site for heme.

Belongs to the cytochrome P450 family. Requires heme as cofactor. In terms of tissue distribution, expressed in roots, developing leaves, the vegetative meristem, and suspension culture cells.

The protein resides in the membrane. It participates in plant hormone biosynthesis; gibberellin biosynthesis. The polypeptide is Cytochrome P450 88A1 (CYP88A1) (Zea mays (Maize)).